The following is a 621-amino-acid chain: UvrABC system protein C (621 aa).

A GIY-YIG domain is found at 21 to 100; it reads AEPGVYLMRD…IKTYQPPYNV (80 aa). A UVR domain is found at 210 to 245; that stretch reads DELIRELKEKMAQAAQQENYEAAARYRDQIRGLEQL.

It belongs to the UvrC family. As to quaternary structure, interacts with UvrB in an incision complex.

The protein localises to the cytoplasm. Functionally, the UvrABC repair system catalyzes the recognition and processing of DNA lesions. UvrC both incises the 5' and 3' sides of the lesion. The N-terminal half is responsible for the 3' incision and the C-terminal half is responsible for the 5' incision. The chain is UvrABC system protein C from Synechococcus sp. (strain JA-3-3Ab) (Cyanobacteria bacterium Yellowstone A-Prime).